A 502-amino-acid polypeptide reads, in one-letter code: Neuronal acetylcholine receptor subunit alpha-7 (502 aa).

A signal peptide spans 1-23; the sequence is MGLRALMLWLLAAAGLVRESLQG. Topologically, residues 24–233 are extracellular; that stretch reads EFQRKLYKEL…VTMRRRTLYY (210 aa). Residues R42 and V44 each contribute to the Ca(2+) site. N-linked (GlcNAc...) asparagine glycans are attached at residues N46, N90, and N133. Residues C150 and C164 are joined by a disulfide bond. 2 residues coordinate Ca(2+): T172 and Y210. C212 and C213 are oxidised to a cystine. The next 3 membrane-spanning stretches (helical) occupy residues 234–254, 262–282, and 295–315; these read GLNLLIPCVLISALALLVFLL, ISLGITVLLSLTVFMLLVAEI, and QYFASTMIIVGLSVVVTVIVL. At 316–469 the chain is on the cytoplasmic side; sequence QYHHHDPDGG…WKFAASVVDR (154 aa). Residues 470–490 form a helical membrane-spanning segment; that stretch reads LCLMAFSVFTIICTIGILMSA.

It belongs to the ligand-gated ion channel (TC 1.A.9) family. Acetylcholine receptor (TC 1.A.9.1) subfamily. Alpha-7/CHRNA7 sub-subfamily. In terms of assembly, homopentamer. Can also form heteropentamers with CHRNB2, mainly found in basal forebrain cholinergic neurons.

Its subcellular location is the postsynaptic cell membrane. The protein resides in the cell membrane. It catalyses the reaction Ca(2+)(in) = Ca(2+)(out). The enzyme catalyses K(+)(in) = K(+)(out). The catalysed reaction is Na(+)(in) = Na(+)(out). It carries out the reaction choline(out) = choline(in). It catalyses the reaction NH4(+)(in) = NH4(+)(out). The enzyme catalyses L-arginine(in) = L-arginine(out). The catalysed reaction is guanidine(out) = guanidine(in). With respect to regulation, activated by a myriad of ligands such as acetylcholine, cytisine, nicotine, choline and epibatidine. Activity is modulated by positive allosteric modulators (PAMs), such as flavonoids, with a wide range of chemical diversity, pharmacological sensitivity and efficacy. AChR activity is inhibited by the antagonists alpha-conotoxons RgIA, ImI and ImII, small disulfide-constrained peptides from cone snails. In terms of biological role, component of neuronal acetylcholine receptors (nAChRs) that function as pentameric, ligand-gated cation channels with high calcium permeability among other activities. nAChRs are excitatory neurotrasnmitter receptors formed by a collection of nAChR subunits known to mediate synaptic transmission in the nervous system and the neuromuscular junction. Each nAchR subunit confers differential attributes to channel properties, including activation, deactivation and desensitization kinetics, pH sensitivity, cation permeability, and binding to allosteric modulators. CHRNA7 is an homooligomeric neuronal acetylcholine receptor abundantly expressed in the central nervous system. Characterized by a fast desensitization and high calcium permeability. Also expressed in non-neuronal cells such as immune cells like lymphocytes, monocytes and macrophages. The polypeptide is Neuronal acetylcholine receptor subunit alpha-7 (CHRNA7) (Gallus gallus (Chicken)).